Here is a 187-residue protein sequence, read N- to C-terminus: Flavin-dependent monooxygenase, reductase subunit HsaB (187 aa).

FAD is bound by residues P32–A36, Q38–S39, C53–T55, R59–S60, and R85–F86. F152–G155 contributes to the NAD(+) binding site.

This sequence belongs to the non-flavoprotein flavin reductase family. HsaAB monooxygenase consists of an oxygenase component HsaA and a reductase component HsaB.

It catalyses the reaction a reduced flavin + NAD(+) = an oxidized flavin + NADH + 2 H(+). It participates in lipid metabolism; steroid biosynthesis. Functionally, catalyzes the reduction of free flavins (FMN or FAD) by NADH. Subsequently, the reduced flavins diffuse to the HsaA oxygenase subunit. This is Flavin-dependent monooxygenase, reductase subunit HsaB (hsaB) from Mycobacterium tuberculosis (strain CDC 1551 / Oshkosh).